Here is a 103-residue protein sequence, read N- to C-terminus: Small ribosomal subunit protein bS18 (103 aa).

Residues 1-19 (MSEERTERPERTERPERPQ) show a composition bias toward basic and acidic residues. The disordered stretch occupies residues 1–33 (MSEERTERPERTERPERPQQRGSGPRKRRPFQR). Basic residues predominate over residues 24–33 (GPRKRRPFQR).

Belongs to the bacterial ribosomal protein bS18 family. In terms of assembly, part of the 30S ribosomal subunit. Forms a tight heterodimer with protein bS6.

In terms of biological role, binds as a heterodimer with protein bS6 to the central domain of the 16S rRNA, where it helps stabilize the platform of the 30S subunit. The protein is Small ribosomal subunit protein bS18 of Geobacter sulfurreducens (strain ATCC 51573 / DSM 12127 / PCA).